Here is a 340-residue protein sequence, read N- to C-terminus: Complement decay-accelerating factor (340 aa).

Sushi domains lie at 1 to 55 (VPNA…FCNR), 56 to 119 (SCEV…FCKK), 120 to 181 (KSCP…ECRE), and 182 to 244 (IYCP…ECRG). A disulfide bridge connects residues C24 and C53. A glycan (N-linked (GlcNAc...) asparagine) is linked at N54. 6 cysteine pairs are disulfide-bonded: C57–C104, C88–C117, C122–C163, C149–C179, C184–C226, and C212–C242. N107 is a glycosylation site (N-linked (GlcNAc...) asparagine). Positions 235-317 (WSGPPPECRG…SGTTSGTTSL (83 aa)) are disordered. A compositionally biased stretch (polar residues) spans 246–268 (SLTSKVPPTVQKPTTVNVPTTEV). Low complexity-rich tracts occupy residues 269-287 (SPTSQKTTTKTTTPNAQAT) and 307-317 (GSGTTSGTTSL). A lipid anchor (GPI-anchor amidated serine) is attached at S312. Positions 313 to 340 (GTTSLLSGHKCFTLTGLLGTLVTMGLLT) are cleaved as a propeptide — removed in mature form.

Belongs to the receptors of complement activation (RCA) family. Monomer (major form) and non-disulfide-linked, covalent homodimer (minor form). Interacts with ADGRE5. The Ser/Thr-rich domain is heavily O-glycosylated.

Its subcellular location is the cell membrane. Its function is as follows. This protein recognizes C4b and C3b fragments that condense with cell-surface hydroxyl or amino groups when nascent C4b and C3b are locally generated during C4 and c3 activation. Interaction of daf with cell-associated C4b and C3b polypeptides interferes with their ability to catalyze the conversion of C2 and factor B to enzymatically active C2a and Bb and thereby prevents the formation of C4b2a and C3bBb, the amplification convertases of the complement cascade. Inhibits complement activation by destabilizing and preventing the formation of C3 and C5 convertases, which prevents complement damage. This Pongo pygmaeus (Bornean orangutan) protein is Complement decay-accelerating factor (CD55).